The chain runs to 206 residues: Cytochrome c oxidase assembly protein CtaG (206 aa).

Residues 1-12 (MSKKPAGKNSNR) are Cytoplasmic-facing. A helical; Signal-anchor for type II membrane protein membrane pass occupies residues 13–35 (IVAAVCLAFFTGMIGMAYAAVPL). Residues 36 to 206 (YKMFCQATGY…ISDTEANLGG (171 aa)) lie on the Periplasmic side of the membrane. The segment at 184-206 (VASSEPVQGTSKIISDTEANLGG) is disordered. The segment covering 188–206 (EPVQGTSKIISDTEANLGG) has biased composition (polar residues).

The protein belongs to the COX11/CtaG family.

It is found in the cell inner membrane. Functionally, exerts its effect at some terminal stage of cytochrome c oxidase synthesis, probably by being involved in the insertion of the copper B into subunit I. This is Cytochrome c oxidase assembly protein CtaG from Mesorhizobium japonicum (strain LMG 29417 / CECT 9101 / MAFF 303099) (Mesorhizobium loti (strain MAFF 303099)).